The following is a 1011-amino-acid chain: Vacuolar membrane protease (1011 aa).

The Cytoplasmic segment spans residues 1-14 (MKLTKAVFRFRRTN). The chain crosses the membrane as a helical span at residues 15–35 (LSTLLVITYLVITTLYVWDHF). At 36-352 (RYHFTLPSDY…WFVVWSARSL (317 aa)) the chain is on the vacuolar side. Zn(2+)-binding residues include H149, D161, E194, E219, and H293. A helical transmembrane segment spans residues 353–373 (FYWNCIILALFPSILAILFLV). Topologically, residues 374–390 (AYDMQLLKFNFWDAMLR) are cytoplasmic. Residues 391–411 (LPVSVCLAYFCVKLFQVLVGQ) traverse the membrane as a helical segment. At 412–420 (LNPYVFSRD) the chain is on the vacuolar side. The helical transmembrane segment at 421-441 (YVSPILAEASMFIFMNYVILS) threads the bilayer. Over 442–451 (SWERLRPLRD) the chain is Cytoplasmic. The helical transmembrane segment at 452–472 (FKTVALVEVSMVLWIYLISVT) threads the bilayer. The Vacuolar portion of the chain corresponds to 473-487 (RWLRDSDYTATGLYP). Residues 488–508 (FTIGYTFVSIGAIIGVFCATF) traverse the membrane as a helical segment. Residues 509 to 647 (KAKLNPEDDS…SILNYDWSIQ (139 aa)) are Cytoplasmic-facing. The segment at 534–585 (MQHQYQQHSQKHSNQHSPHHSTHHSAQHSVHHSPRQSIHQVPSSEQRQRDAS) is disordered. A compositionally biased stretch (basic residues) spans 542 to 567 (SQKHSNQHSPHHSTHHSAQHSVHHSP). A compositionally biased stretch (polar residues) spans 568 to 578 (RQSIHQVPSSE). A helical transmembrane segment spans residues 648–668 (FMVVTPWVTYFTWICLDLIMG). The Vacuolar portion of the chain corresponds to 669–681 (AMNQTIQESAKGT). An N-linked (GlcNAc...) asparagine glycan is attached at N671. Residues 682-702 (TFVTHMALIGSLLLSLPMLPF) traverse the membrane as a helical segment. Residues 703-708 (TYKLHS) lie on the Cytoplasmic side of the membrane. Residues 709–729 (FAGMLFLLLAVTTAVWTIVAP) form a helical membrane-spanning segment. Topologically, residues 730-1011 (PFTESSPLKL…MVSVTKYVEL (282 aa)) are vacuolar. N751, N825, and N854 each carry an N-linked (GlcNAc...) asparagine glycan.

This sequence belongs to the peptidase M28 family. Zn(2+) serves as cofactor.

Its subcellular location is the vacuole membrane. Functionally, may be involved in vacuolar sorting and osmoregulation. This chain is Vacuolar membrane protease, found in Eremothecium gossypii (strain ATCC 10895 / CBS 109.51 / FGSC 9923 / NRRL Y-1056) (Yeast).